The sequence spans 776 residues: DExH-box ATP-dependent RNA helicase DExH18, mitochondrial (776 aa).

The N-terminal 84 residues, 1–84 (MARGVAGVLR…RSFSSTVDNN (84 aa)), are a transit peptide targeting the mitochondrion. Residues 80 to 101 (TVDNNGENDDIEESVGSESDDY) form a disordered region. Over residues 85–101 (GENDDIEESVGSESDDY) the composition is skewed to acidic residues. The Helicase ATP-binding domain occupies 268 to 426 (FARAMKRKIV…RFKPLVVEAK (159 aa)). Residue 281-288 (GPTNSGKT) coordinates ATP. Residues 361–364 (DEIQ) carry the DEIH box; degenerate motif. Residues 427–595 (TLLGELKNVK…LFAAQVPDMA (169 aa)) enclose the Helicase C-terminal domain.

This sequence belongs to the DExH box helicase family. In terms of assembly, homodimer; in free form. Component of the mitochondrial degradosome (mtEXO) complex which is a heteropentamer containing 2 copies of SUPV3L1 and 3 copies of PNPT1. Mg(2+) is required as a cofactor. Mn(2+) serves as cofactor.

Its subcellular location is the nucleus. The protein resides in the mitochondrion matrix. It is found in the mitochondrion nucleoid. The enzyme catalyses ATP + H2O = ADP + phosphate + H(+). Functionally, major helicase player in mitochondrial RNA metabolism. Component of the mitochondrial degradosome (mtEXO) complex, that degrades 3' overhang double-stranded RNA with a 3'-to-5' directionality in an ATP-dependent manner. ATPase and ATP-dependent multisubstrate helicase, able to unwind double-stranded (ds) DNA and RNA, and RNA/DNA heteroduplexes in the 5'-to-3' direction. Plays a role in the RNA surveillance system in mitochondria; regulates the stability of mature mRNAs, the removal of aberrantly formed mRNAs and the rapid degradation of non coding processing intermediates. The sequence is that of DExH-box ATP-dependent RNA helicase DExH18, mitochondrial from Arabidopsis thaliana (Mouse-ear cress).